Reading from the N-terminus, the 239-residue chain is Ubiquinone biosynthesis O-methyltransferase (239 aa).

Residues Arg44, Gly63, Asp84, and Met128 each coordinate S-adenosyl-L-methionine.

Belongs to the methyltransferase superfamily. UbiG/COQ3 family.

The catalysed reaction is a 3-demethylubiquinol + S-adenosyl-L-methionine = a ubiquinol + S-adenosyl-L-homocysteine + H(+). The enzyme catalyses a 3-(all-trans-polyprenyl)benzene-1,2-diol + S-adenosyl-L-methionine = a 2-methoxy-6-(all-trans-polyprenyl)phenol + S-adenosyl-L-homocysteine + H(+). It participates in cofactor biosynthesis; ubiquinone biosynthesis. Its function is as follows. O-methyltransferase that catalyzes the 2 O-methylation steps in the ubiquinone biosynthetic pathway. In Xanthomonas oryzae pv. oryzae (strain MAFF 311018), this protein is Ubiquinone biosynthesis O-methyltransferase.